Consider the following 428-residue polypeptide: Probable pectin lyase F (428 aa).

The N-terminal stretch at 1–20 (MVLLHPLLTAAALLGASARA) is a signal peptide. Cysteine 83 and cysteine 107 are joined by a disulfide. The active site involves arginine 257. Residue asparagine 276 is glycosylated (N-linked (GlcNAc...) asparagine). Cysteine 324 and cysteine 332 are joined by a disulfide. 2 disordered regions span residues 337–367 (LTSS…MTTD) and 383–428 (GSGG…HHHY). Positions 389 to 417 (AASSSASITPSPTSSAIPSSSATPSSSAY) are enriched in low complexity. Residues 418–428 (ARRHYARHHHY) show a composition bias toward basic residues.

The protein belongs to the polysaccharide lyase 1 family.

The protein resides in the secreted. The catalysed reaction is Eliminative cleavage of (1-&gt;4)-alpha-D-galacturonan methyl ester to give oligosaccharides with 4-deoxy-6-O-methyl-alpha-D-galact-4-enuronosyl groups at their non-reducing ends.. Its function is as follows. Pectinolytic enzymes consist of four classes of enzymes: pectin lyase, polygalacturonase, pectin methylesterase and rhamnogalacturonase. Among pectinolytic enzymes, pectin lyase is the most important in depolymerization of pectin, since it cleaves internal glycosidic bonds of highly methylated pectins. This Aspergillus flavus (strain ATCC 200026 / FGSC A1120 / IAM 13836 / NRRL 3357 / JCM 12722 / SRRC 167) protein is Probable pectin lyase F (pelF).